Here is a 360-residue protein sequence, read N- to C-terminus: Peptide chain release factor 1 (360 aa).

Gln-235 is subject to N5-methylglutamine. Residues 286–313 (RQQAEASTRRNLLGSGDRSDRNRTYNFP) are disordered.

The protein belongs to the prokaryotic/mitochondrial release factor family. Methylated by PrmC. Methylation increases the termination efficiency of RF1.

It is found in the cytoplasm. Its function is as follows. Peptide chain release factor 1 directs the termination of translation in response to the peptide chain termination codons UAG and UAA. This Cronobacter sakazakii (strain ATCC BAA-894) (Enterobacter sakazakii) protein is Peptide chain release factor 1.